Here is a 90-residue protein sequence, read N- to C-terminus: UPF0298 protein RBAM_014860 (90 aa).

This sequence belongs to the UPF0298 family.

The protein resides in the cytoplasm. This Bacillus velezensis (strain DSM 23117 / BGSC 10A6 / LMG 26770 / FZB42) (Bacillus amyloliquefaciens subsp. plantarum) protein is UPF0298 protein RBAM_014860.